A 298-amino-acid polypeptide reads, in one-letter code: Nucleoid occlusion protein (298 aa).

Residues 152–171 (EALAQRLGKGQSTVANKLRL) constitute a DNA-binding region (H-T-H motif).

The protein belongs to the ParB family.

Its subcellular location is the cytoplasm. The protein localises to the nucleoid. In terms of biological role, effects nucleoid occlusion by binding relatively nonspecifically to DNA and preventing the assembly of the division machinery in the vicinity of the nucleoid, especially under conditions that disturb the cell cycle. It helps to coordinate cell division and chromosome segregation by preventing the formation of the Z ring through the nucleoid, which would cause chromosome breakage. This Lysinibacillus sphaericus (strain C3-41) protein is Nucleoid occlusion protein.